Here is a 757-residue protein sequence, read N- to C-terminus: NAD(P)H-quinone oxidoreductase subunit 5, chloroplastic (757 aa).

The next 17 helical transmembrane spans lie at 9–29 (WIIPFVPLPVTMSIGLGLLLV), 40–60 (WAFPSVSLLSIVMVFSADLSV), 89–109 (IDPLTSIMSILITTVGIMVLI), 122–139 (LRFFAYMSFSNTSMLGLV), 147–167 (IYIFWELVGMCSYLLIGFWFT), 185–205 (GDFGLLLGILGLYWITGSFEF), 219–239 (NGVNSLFATLCASLLFAGAVA), 258–278 (TPISALIHAATMVAAGIFLVA), 280–300 (LLPLFTVIPYIMNLISLIGVI), 327–347 (LGYIMLAPGIGSYRAALFHLI), 354–374 (ALLFLGSGSIIHSMEPIVGYS), 396–416 (MTFLLGTLSLCGIPPLACFWS), 425–445 (WLYSPIFAIIACATAGLTAFY), 544–564 (LLPLLVLVLFTLFVGFIGIPF), 607–627 (SIAYFGIFIASLLYGSVYLFF), 692–712 (GIMNGVGVSSFFVGEGIKYLG), and 718–738 (SYLFVYLSYVSIFLLIYIFFF).

Belongs to the complex I subunit 5 family. NDH is composed of at least 16 different subunits, 5 of which are encoded in the nucleus.

The protein localises to the plastid. It is found in the chloroplast thylakoid membrane. It carries out the reaction a plastoquinone + NADH + (n+1) H(+)(in) = a plastoquinol + NAD(+) + n H(+)(out). The enzyme catalyses a plastoquinone + NADPH + (n+1) H(+)(in) = a plastoquinol + NADP(+) + n H(+)(out). Functionally, NDH shuttles electrons from NAD(P)H:plastoquinone, via FMN and iron-sulfur (Fe-S) centers, to quinones in the photosynthetic chain and possibly in a chloroplast respiratory chain. The immediate electron acceptor for the enzyme in this species is believed to be plastoquinone. Couples the redox reaction to proton translocation, and thus conserves the redox energy in a proton gradient. The chain is NAD(P)H-quinone oxidoreductase subunit 5, chloroplastic (ndhF) from Drimys granadensis.